The sequence spans 346 residues: tRNA N6-adenosine threonylcarbamoyltransferase (346 aa).

The Fe cation site is built by H110 and H114. Substrate is bound by residues 132–136 (LLSGG), D165, G178, and N274. Residue D298 participates in Fe cation binding.

Belongs to the KAE1 / TsaD family. The cofactor is Fe(2+).

Its subcellular location is the cytoplasm. It carries out the reaction L-threonylcarbamoyladenylate + adenosine(37) in tRNA = N(6)-L-threonylcarbamoyladenosine(37) in tRNA + AMP + H(+). Its function is as follows. Required for the formation of a threonylcarbamoyl group on adenosine at position 37 (t(6)A37) in tRNAs that read codons beginning with adenine. Is involved in the transfer of the threonylcarbamoyl moiety of threonylcarbamoyl-AMP (TC-AMP) to the N6 group of A37, together with TsaE and TsaB. TsaD likely plays a direct catalytic role in this reaction. The protein is tRNA N6-adenosine threonylcarbamoyltransferase of Borreliella afzelii (strain PKo) (Borrelia afzelii).